The primary structure comprises 161 residues: uncharacterized protein (161 aa).

The chain crosses the membrane as a helical span at residues 16 to 36; it reads KLGLVVAIFFFMMGTTVVVLY.

The protein resides in the membrane. This is an uncharacterized protein from Encephalitozoon cuniculi (strain GB-M1) (Microsporidian parasite).